Here is a 293-residue protein sequence, read N- to C-terminus: Putative F-box/kelch-repeat protein At4g34170 (293 aa).

The region spanning 9-55 (VKTMLMLHDDLILNCLARVSRSNHPTLSLVCKRFHSLLASVELYQTR) is the F-box domain. Kelch repeat units follow at residues 94 to 140 (NIDA…TLDG), 141 to 187 (KIYV…ESVR), and 226 to 272 (SYCV…LADY).

The chain is Putative F-box/kelch-repeat protein At4g34170 from Arabidopsis thaliana (Mouse-ear cress).